The chain runs to 1450 residues: Protein TIC 214 (1450 aa).

A run of 6 helical transmembrane segments spans residues 29–49 (FGLY…IVVI), 61–81 (VMAF…IYYT), 86–106 (LFIK…FYWQ), 132–152 (FFDS…PIFF), 166–186 (LNFF…FFNA), and 213–233 (IIPI…HIPF).

The protein belongs to the TIC214 family. Part of the Tic complex.

The protein resides in the plastid. Its subcellular location is the chloroplast inner membrane. Its function is as follows. Involved in protein precursor import into chloroplasts. May be part of an intermediate translocation complex acting as a protein-conducting channel at the inner envelope. The protein is Protein TIC 214 of Chaetosphaeridium globosum (Charophycean green alga).